The primary structure comprises 201 residues: ATP-dependent Clp protease proteolytic subunit (201 aa).

S105 (nucleophile) is an active-site residue. H130 is an active-site residue.

This sequence belongs to the peptidase S14 family. As to quaternary structure, fourteen ClpP subunits assemble into 2 heptameric rings which stack back to back to give a disk-like structure with a central cavity, resembling the structure of eukaryotic proteasomes.

It is found in the cytoplasm. The catalysed reaction is Hydrolysis of proteins to small peptides in the presence of ATP and magnesium. alpha-casein is the usual test substrate. In the absence of ATP, only oligopeptides shorter than five residues are hydrolyzed (such as succinyl-Leu-Tyr-|-NHMec, and Leu-Tyr-Leu-|-Tyr-Trp, in which cleavage of the -Tyr-|-Leu- and -Tyr-|-Trp bonds also occurs).. In terms of biological role, cleaves peptides in various proteins in a process that requires ATP hydrolysis. Has a chymotrypsin-like activity. Plays a major role in the degradation of misfolded proteins. The sequence is that of ATP-dependent Clp protease proteolytic subunit from Acinetobacter baylyi (strain ATCC 33305 / BD413 / ADP1).